The chain runs to 454 residues: UDP-N-acetylmuramate--L-alanine ligase (454 aa).

ATP is bound at residue 113 to 119 (GSHGKTT).

Belongs to the MurCDEF family.

The protein resides in the cytoplasm. It catalyses the reaction UDP-N-acetyl-alpha-D-muramate + L-alanine + ATP = UDP-N-acetyl-alpha-D-muramoyl-L-alanine + ADP + phosphate + H(+). It participates in cell wall biogenesis; peptidoglycan biosynthesis. Cell wall formation. The polypeptide is UDP-N-acetylmuramate--L-alanine ligase (Aquifex aeolicus (strain VF5)).